We begin with the raw amino-acid sequence, 154 residues long: MDVTDISTITPLELISLEEPPATKEGAIEFLLDLAVDAGRVDDRDAALDALLEREGEATTGVGFGIGIPHAKTDAVSKPTVAFARSAEGIDFDAMDDKPAKLLFMILVPAAGGEDHLQILSALSRSLMHEDVREKLLEAESKQTVQDVLAEVVE.

Positions 8–152 (TITPLELISL…QTVQDVLAEV (145 aa)) constitute a PTS EIIA type-2 domain. The active-site Tele-phosphohistidine intermediate is H70. Phosphohistidine; by HPr is present on H70.

Its subcellular location is the cytoplasm. Functionally, the phosphoenolpyruvate-dependent sugar phosphotransferase system (sugar PTS), a major carbohydrate active transport system, catalyzes the phosphorylation of incoming sugar substrates concomitantly with their translocation across the cell membrane. The enzyme II PtfABC PTS system is involved in fructose transport. This chain is PTS system fructose-specific EIIA component, found in Haloferax volcanii (strain ATCC 29605 / DSM 3757 / JCM 8879 / NBRC 14742 / NCIMB 2012 / VKM B-1768 / DS2) (Halobacterium volcanii).